The following is a 183-amino-acid chain: Ly6/PLAUR domain-containing protein 6B (183 aa).

An N-terminal signal peptide occupies residues 1-39 (MLYKSSDRPAHKVSMLLLCHALAIAVVQIVIFSESWAFA). The 92-residue stretch at 60-151 (FKCFTCENAG…VELPTNHTNA (92 aa)) folds into the UPAR/Ly6 domain. Positions 60–154 (FKCFTCENAG…PTNHTNAVFA (95 aa)) are sufficient for inhibiting alpha-7 nAChR currents. 6 disulfides stabilise this stretch: Cys62/Cys90, Cys65/Cys74, Cys83/Cys109, Cys115/Cys134, Cys120/Cys131, and Cys135/Cys140. A lipid anchor (GPI-anchor amidated serine) is attached at Ser164. A propeptide spans 165–183 (SAPTLYLPVLAWVFVLPLL) (removed in mature form).

Its subcellular location is the cell membrane. In terms of biological role, likely acts as a modulator of nicotinic acetylcholine receptors (nAChRs) activity. In vitro acts on nAChRs in a subtype- and stoichiometry-dependent manner. Modulates specifically alpha-3(3):beta-4(2) nAChRs by enhancing the sensitivity to ACh, decreasing ACh-induced maximal current response and increasing the rate of desensitization to ACh; has no effect on alpha-7 homomeric nAChRs; modulates alpha-3(2):alpha-5:beta-4(2) nAChRs in the context of CHRNA5/alpha-5 variant Asn-398 but not its wild-type sequence. However, according to another report in vitro it can weakly inhibits alpha-7 nAChRs. This Homo sapiens (Human) protein is Ly6/PLAUR domain-containing protein 6B (LYPD6B).